A 132-amino-acid polypeptide reads, in one-letter code: Small ribosomal subunit protein uS8 (132 aa).

Belongs to the universal ribosomal protein uS8 family. As to quaternary structure, part of the 30S ribosomal subunit. Contacts proteins S5 and S12.

Functionally, one of the primary rRNA binding proteins, it binds directly to 16S rRNA central domain where it helps coordinate assembly of the platform of the 30S subunit. The protein is Small ribosomal subunit protein uS8 of Geobacillus kaustophilus (strain HTA426).